Consider the following 315-residue polypeptide: MLEIEKPIIECIEASEDGTYGKYVVEPLERGYGITLGNALRRILLSSLPGVATSSVKIDGVLHEFSTVQGVKEDVTELILNIKSLALRMNGEGPKVIYIDAKGPGEVTGADIKTDGDVEVVNKDLHIATLDDNGRLYMELTVNRGRGYVTQNKNKSDELPISSIAIDSIYTPVKKVNFTVDNTRVGQITDYDKLTLEIWTNGTIKIDEAISLSAKILIEHFKLFMSLTNNTNDVEIMIEKEEDKKEKVLEMTVEELDLSVRSYNCLKRAGINTVQELATKSMDDMMKVRNLGKKSLEEVERKLKELGLCLKLNDE.

Residues 1–228 (MLEIEKPIIE…EHFKLFMSLT (228 aa)) are alpha N-terminal domain (alpha-NTD). Positions 245–315 (KEKVLEMTVE…LGLCLKLNDE (71 aa)) are alpha C-terminal domain (alpha-CTD).

Belongs to the RNA polymerase alpha chain family. Homodimer. The RNAP catalytic core consists of 2 alpha, 1 beta, 1 beta' and 1 omega subunit. When a sigma factor is associated with the core the holoenzyme is formed, which can initiate transcription.

It catalyses the reaction RNA(n) + a ribonucleoside 5'-triphosphate = RNA(n+1) + diphosphate. In terms of biological role, DNA-dependent RNA polymerase catalyzes the transcription of DNA into RNA using the four ribonucleoside triphosphates as substrates. The polypeptide is DNA-directed RNA polymerase subunit alpha (Clostridium botulinum (strain Alaska E43 / Type E3)).